The following is a 191-amino-acid chain: Orotate phosphoribosyltransferase (191 aa).

5-phospho-alpha-D-ribose 1-diphosphate is bound at residue 114-122 (EDVITTGGS). Thr-118 and Arg-146 together coordinate orotate.

The protein belongs to the purine/pyrimidine phosphoribosyltransferase family. PyrE subfamily. Homodimer. Mg(2+) serves as cofactor.

It carries out the reaction orotidine 5'-phosphate + diphosphate = orotate + 5-phospho-alpha-D-ribose 1-diphosphate. Its pathway is pyrimidine metabolism; UMP biosynthesis via de novo pathway; UMP from orotate: step 1/2. Its function is as follows. Catalyzes the transfer of a ribosyl phosphate group from 5-phosphoribose 1-diphosphate to orotate, leading to the formation of orotidine monophosphate (OMP). This chain is Orotate phosphoribosyltransferase, found in Caldicellulosiruptor saccharolyticus (strain ATCC 43494 / DSM 8903 / Tp8T 6331).